A 314-amino-acid polypeptide reads, in one-letter code: Methionyl-tRNA formyltransferase (314 aa).

Ser113 to Pro116 provides a ligand contact to (6S)-5,6,7,8-tetrahydrofolate.

Belongs to the Fmt family.

The catalysed reaction is L-methionyl-tRNA(fMet) + (6R)-10-formyltetrahydrofolate = N-formyl-L-methionyl-tRNA(fMet) + (6S)-5,6,7,8-tetrahydrofolate + H(+). Functionally, attaches a formyl group to the free amino group of methionyl-tRNA(fMet). The formyl group appears to play a dual role in the initiator identity of N-formylmethionyl-tRNA by promoting its recognition by IF2 and preventing the misappropriation of this tRNA by the elongation apparatus. The polypeptide is Methionyl-tRNA formyltransferase (Pseudomonas aeruginosa (strain UCBPP-PA14)).